A 141-amino-acid polypeptide reads, in one-letter code: D-aminoacyl-tRNA deacylase (141 aa).

The Gly-cisPro motif, important for rejection of L-amino acids motif lies at 133-134; it reads GP.

This sequence belongs to the DTD family. As to quaternary structure, homodimer.

Its subcellular location is the cytoplasm. The catalysed reaction is glycyl-tRNA(Ala) + H2O = tRNA(Ala) + glycine + H(+). The enzyme catalyses a D-aminoacyl-tRNA + H2O = a tRNA + a D-alpha-amino acid + H(+). An aminoacyl-tRNA editing enzyme that deacylates mischarged D-aminoacyl-tRNAs. Also deacylates mischarged glycyl-tRNA(Ala), protecting cells against glycine mischarging by AlaRS. Acts via tRNA-based rather than protein-based catalysis; rejects L-amino acids rather than detecting D-amino acids in the active site. By recycling D-aminoacyl-tRNA to D-amino acids and free tRNA molecules, this enzyme counteracts the toxicity associated with the formation of D-aminoacyl-tRNA entities in vivo and helps enforce protein L-homochirality. In Streptomyces coelicolor (strain ATCC BAA-471 / A3(2) / M145), this protein is D-aminoacyl-tRNA deacylase.